The primary structure comprises 560 residues: MWCLSCFKPSTKHDPSEDRFEEETNIVTGISLYEDVILRQRRSEADQIEWAIQDSFNPQETSRCRQREEDDQIARGLQYVEETELDKSVVDEEDQQLSKIVEESLKEKGKSKQFEDDQVENDEQQALMVQESLYMVELSAQLEEDKNISTIPPLNEDAQLQKVIWESAKGKGQIEHFKDPVEEDGNLPRVDLNVNHPHSICDGCKSAIEYGRSVHALGVNWHPECFCCRYCDKPIAMHEFSNTKGRCHITCYERSHPNCHVCKKKFPGRKYKEHPFWKEKYCPFHEVDGTPKCCSCERLEPWGTKYVMLADNRWLCVKCMECAVMDTYECQPLHFEIREFFGSLNMKVEKEFPLLLVEKEALKKAEAQEKIDNQHGVVTRGICLSEGQIVNSVFKKPTMGPNGELVSLGTEPQKVVGGCEVTAILILYGLPRLLTGYILAHEMMHAWLRLNGYRNLKLELEEGICQVLGHMWLESQTYSSSAAASSASSSSRTPAANASKKGAQSDYEKKLVEFCKDQIETDDSPVYGVGFRKVNQMVSDSSLHKILKSIQHWTKPDSNL.

UIM domains are found at residues 43-62 (SEAD…QETS), 92-111 (EEDQ…KGKS), and 155-174 (NEDA…KGQI). Residues 199-269 (SICDGCKSAI…HVCKKKFPGR (71 aa)) enclose the LIM zinc-binding domain.

Interacts with ubiquitin.

Functionally, ubiquitin receptor that probably regulates developmental process. The chain is Protein DA1-related 7 (DAR7) from Arabidopsis thaliana (Mouse-ear cress).